Reading from the N-terminus, the 558-residue chain is Magnesium-chelatase 60 kDa subunit (558 aa).

2 disordered regions span residues Met234–Met268 and Met298–Leu325. A compositionally biased stretch (acidic residues) spans Ala240 to Asp254. Residues Met298–Ala308 are compositionally biased toward low complexity. In terms of domain architecture, VWFA spans Val376–Ala555.

It belongs to the Mg-chelatase subunits D/I family.

The enzyme catalyses protoporphyrin IX + Mg(2+) + ATP + H2O = Mg-protoporphyrin IX + ADP + phosphate + 3 H(+). Its pathway is porphyrin-containing compound metabolism; bacteriochlorophyll biosynthesis. Its function is as follows. Involved in bacteriochlorophyll biosynthesis; introduces a magnesium ion into protoporphyrin IX to yield Mg-protoporphyrin IX. The protein is Magnesium-chelatase 60 kDa subunit (bchD) of Cereibacter sphaeroides (strain ATCC 17023 / DSM 158 / JCM 6121 / CCUG 31486 / LMG 2827 / NBRC 12203 / NCIMB 8253 / ATH 2.4.1.) (Rhodobacter sphaeroides).